The sequence spans 89 residues: Protein YxiC (89 aa).

The polypeptide is Protein YxiC (yxiC) (Bacillus subtilis (strain 168)).